Consider the following 413-residue polypeptide: Probable short/branched chain specific acyl-CoA dehydrogenase (413 aa).

FAD is bound by residues 152–161 and 186–188; these read FCLSESGSGS and WIT. Ser161 is a binding site for substrate. Residues Tyr208, Tyr262, and 270–273 each bind substrate; that span reads NEGR. FAD is bound by residues Arg298, Gln309, and 366–370; that span reads SMLGG. The Proton acceptor role is filled by Glu393. 395–397 contributes to the FAD binding site; sequence TSN.

This sequence belongs to the acyl-CoA dehydrogenase family. In terms of assembly, homotetramer. Requires FAD as cofactor.

The enzyme catalyses 2-methylbutanoyl-CoA + oxidized [electron-transfer flavoprotein] + H(+) = (2E)-2-methylbut-2-enoyl-CoA + reduced [electron-transfer flavoprotein]. The protein operates within lipid metabolism; mitochondrial fatty acid beta-oxidation. Its pathway is amino-acid degradation; L-isoleucine degradation. Functionally, probable short and branched chain specific acyl-CoA dehydrogenase that catalyzes the removal of one hydrogen from C-2 and C-3 of the fatty acyl-CoA thioester, resulting in the formation of trans-2-enoyl-CoA. In Dictyostelium discoideum (Social amoeba), this protein is Probable short/branched chain specific acyl-CoA dehydrogenase (acadsb).